We begin with the raw amino-acid sequence, 81 residues long: Photosystem I iron-sulfur center (81 aa).

4Fe-4S ferredoxin-type domains follow at residues 2–31 (SHSVKIYDTCIGCTQCVRACPLDVLEMVPW) and 39–68 (IASSPRTEDCVGCKRCETACPTDFLSIRVY). Cysteine 11, cysteine 14, cysteine 17, cysteine 21, cysteine 48, cysteine 51, cysteine 54, and cysteine 58 together coordinate [4Fe-4S] cluster.

As to quaternary structure, the G.violaceus PSI reaction center is composed of one copy each of PsaA,B,C,D,E,F,L,M and Z, and forms trimeric complexes. Requires [4Fe-4S] cluster as cofactor.

It is found in the cell inner membrane. It catalyses the reaction reduced [plastocyanin] + hnu + oxidized [2Fe-2S]-[ferredoxin] = oxidized [plastocyanin] + reduced [2Fe-2S]-[ferredoxin]. In terms of biological role, apoprotein for the two 4Fe-4S centers FA and FB of photosystem I (PSI); essential for photochemical activity. FB is the terminal electron acceptor of PSI, donating electrons to ferredoxin. The C-terminus interacts with PsaA/B/D and helps assemble the protein into the PSI complex. Required for binding of PsaD and PsaE to PSI. PSI is a plastocyanin/cytochrome c6-ferredoxin oxidoreductase, converting photonic excitation into a charge separation, which transfers an electron from the donor P700 chlorophyll pair to the spectroscopically characterized acceptors A0, A1, FX, FA and FB in turn. In Gloeobacter violaceus (strain ATCC 29082 / PCC 7421), this protein is Photosystem I iron-sulfur center.